A 433-amino-acid chain; its full sequence is KH domain-containing, RNA-binding, signal transduction-associated protein 1 (433 aa).

A disordered region spans residues 1 to 79 (MQRRDDSSAR…PLLPGGAVKM (79 aa)). Low complexity predominate over residues 41 to 76 (GAQHPQPLLTGGAAAGSSGAQGPAAANPAPLLPGGA). The interval 82 to 243 (ENKYLPELMA…VKKFLVPDMM (162 aa)) is involved in homodimerization. The 27-residue stretch at 171–197 (QEETGAKISVLGKGSMRDKAKEEELRK) folds into the KH domain. 3 disordered regions span residues 259–305 (GVPE…ALVR), 317–351 (AAVA…PPPP), and 403–433 (QDDW…YGRY). The segment covering 277-300 (APPPPPPVPRGRGVGPPPPPPPPR) has biased composition (pro residues). Residues 329 to 342 (VRGAPAPRARAAGI) show a composition bias toward low complexity. Positions 424–433 (AYREHPYGRY) are enriched in basic and acidic residues.

The protein belongs to the KHDRBS family. In terms of assembly, self-associates to form homooligomers when bound to RNA, oligomerization appears to be limited when binding to proteins. In terms of processing, tyrosine phosphorylated by several non-receptor tyrosine kinases including LCK, FYN and JAK3. Post-translationally, acetylated. Positively correlates with ability to bind RNA. Methylated by HRMT1L2. Required for nuclear localization.

It is found in the nucleus. It localises to the cytoplasm. The protein resides in the membrane. Recruited and tyrosine phosphorylated by several receptor systems, for example the T-cell, leptin and insulin receptors. Once phosphorylated, functions as an adapter protein in signal transduction cascades by binding to SH2 and SH3 domain-containing proteins. Role in G2-M progression in the cell cycle. Represses CBP-dependent transcriptional activation apparently by competing with other nuclear factors for binding to CBP. Also acts as a putative regulator of mRNA stability and/or translation rates and mediates mRNA nuclear export. Plays a role in the regulation of alternative splicing and influences mRNA splice site selection and exon inclusion. This is KH domain-containing, RNA-binding, signal transduction-associated protein 1 from Gallus gallus (Chicken).